A 450-amino-acid chain; its full sequence is UDP-N-acetylmuramoylalanine--D-glutamate ligase (450 aa).

Glycine 119–threonine 125 lines the ATP pocket.

This sequence belongs to the MurCDEF family.

The protein localises to the cytoplasm. It carries out the reaction UDP-N-acetyl-alpha-D-muramoyl-L-alanine + D-glutamate + ATP = UDP-N-acetyl-alpha-D-muramoyl-L-alanyl-D-glutamate + ADP + phosphate + H(+). It participates in cell wall biogenesis; peptidoglycan biosynthesis. Cell wall formation. Catalyzes the addition of glutamate to the nucleotide precursor UDP-N-acetylmuramoyl-L-alanine (UMA). This Streptococcus pneumoniae (strain ATCC 700669 / Spain 23F-1) protein is UDP-N-acetylmuramoylalanine--D-glutamate ligase.